A 408-amino-acid polypeptide reads, in one-letter code: Peptidase T (408 aa).

Residue His78 participates in Zn(2+) binding. The active site involves Asp80. Asp141 serves as a coordination point for Zn(2+). Glu175 (proton acceptor) is an active-site residue. 3 residues coordinate Zn(2+): Glu176, Asp198, and His380.

The protein belongs to the peptidase M20B family. Zn(2+) is required as a cofactor.

The protein resides in the cytoplasm. The enzyme catalyses Release of the N-terminal residue from a tripeptide.. In terms of biological role, cleaves the N-terminal amino acid of tripeptides. The chain is Peptidase T from Clostridium botulinum (strain Loch Maree / Type A3).